The primary structure comprises 346 residues: Syntaxin UFE1 (346 aa).

Residues 1–324 (MMSDLTPIFR…RKAKRAAGRT (324 aa)) are Cytoplasmic-facing. The t-SNARE coiled-coil homology domain maps to 255-317 (LNQKNEQLKK…KKGNKELRKA (63 aa)). The chain crosses the membrane as a helical; Anchor for type IV membrane protein span at residues 325–342 (AKMTTYGAIIMGVFILFL). Residues 343-346 (DYVG) lie on the Lumenal side of the membrane.

This sequence belongs to the syntaxin family. In terms of assembly, component of a SNARE complex consisting of UFE1, USE1, SEC20 and SEC22 or YKT6.

It localises to the endoplasmic reticulum membrane. In terms of biological role, syntaxin required for targeting and fusion of Golgi-derived retrograde transport vesicles with the ER. The chain is Syntaxin UFE1 (UFE1) from Saccharomyces cerevisiae (strain ATCC 204508 / S288c) (Baker's yeast).